A 395-amino-acid chain; its full sequence is Long-chain-alcohol dehydrogenase 1 (395 aa).

NAD(+) is bound by residues 98–102 (GSALD) and 141–144 (TTSG).

Belongs to the iron-containing alcohol dehydrogenase family. As to quaternary structure, homooctamer.

The enzyme catalyses glycerol + NAD(+) = dihydroxyacetone + NADH + H(+). The catalysed reaction is a long-chain primary fatty alcohol + 2 NAD(+) + H2O = a long-chain fatty acid + 2 NADH + 3 H(+). Functionally, long-chain alkyl alcohol dehydrogenase that can oxidize a broad range of alkyl alcohols from ethanol to 1-triacontanol (C2 to C30) as well as 1,3-propanediol and acetaldehyde. The best substrate is ethanol. Also oxidizes glycerol. The polypeptide is Long-chain-alcohol dehydrogenase 1 (adh1) (Geobacillus thermodenitrificans (strain NG80-2)).